The chain runs to 87 residues: Small ribosomal subunit protein uS17 (87 aa).

The protein belongs to the universal ribosomal protein uS17 family. As to quaternary structure, part of the 30S ribosomal subunit.

One of the primary rRNA binding proteins, it binds specifically to the 5'-end of 16S ribosomal RNA. In Neisseria meningitidis serogroup C (strain 053442), this protein is Small ribosomal subunit protein uS17.